A 529-amino-acid polypeptide reads, in one-letter code: Bifunctional purine biosynthesis protein PurH (529 aa).

An MGS-like domain is found at 1 to 148; the sequence is MEQSFLPIRC…KNYKYVTVVV (148 aa).

Belongs to the PurH family.

It catalyses the reaction (6R)-10-formyltetrahydrofolate + 5-amino-1-(5-phospho-beta-D-ribosyl)imidazole-4-carboxamide = 5-formamido-1-(5-phospho-D-ribosyl)imidazole-4-carboxamide + (6S)-5,6,7,8-tetrahydrofolate. The catalysed reaction is IMP + H2O = 5-formamido-1-(5-phospho-D-ribosyl)imidazole-4-carboxamide. It participates in purine metabolism; IMP biosynthesis via de novo pathway; 5-formamido-1-(5-phospho-D-ribosyl)imidazole-4-carboxamide from 5-amino-1-(5-phospho-D-ribosyl)imidazole-4-carboxamide (10-formyl THF route): step 1/1. Its pathway is purine metabolism; IMP biosynthesis via de novo pathway; IMP from 5-formamido-1-(5-phospho-D-ribosyl)imidazole-4-carboxamide: step 1/1. The sequence is that of Bifunctional purine biosynthesis protein PurH from Wigglesworthia glossinidia brevipalpis.